A 142-amino-acid polypeptide reads, in one-letter code: Large ribosomal subunit protein uL13 (142 aa).

It belongs to the universal ribosomal protein uL13 family. As to quaternary structure, part of the 50S ribosomal subunit.

Its function is as follows. This protein is one of the early assembly proteins of the 50S ribosomal subunit, although it is not seen to bind rRNA by itself. It is important during the early stages of 50S assembly. This is Large ribosomal subunit protein uL13 from Actinobacillus succinogenes (strain ATCC 55618 / DSM 22257 / CCUG 43843 / 130Z).